The chain runs to 365 residues: Phosphatidylcholine:ceramide cholinephosphotransferase 2 (365 aa).

Over residues 1-14 (MDIIETAKLEEHLE) the composition is skewed to basic and acidic residues. A disordered region spans residues 1–52 (MDIIETAKLEEHLENQPSDPTNTYARPAEPVEEENKNGNGKPKSLSSGLRKG). A compositionally biased stretch (polar residues) spans 15 to 24 (NQPSDPTNTY). The next 4 helical transmembrane spans lie at 80–100 (GIAFIYAVFNLVLTTVMITVV), 128–148 (FSVSEINGIILVGLWITQWLF), 159–179 (FCFIIGTLYLYRCITMYVTTL), and 206–226 (LISGGGLSITGSHILCGDFLF). Histidine 229 is a catalytic residue. Residues 248–268 (FWWYHLICWLLSAAGIICILV) form a helical membrane-spanning segment. Active-site residues include histidine 272 and aspartate 276. The helical transmembrane segment at 275–295 (IDVIIAYYITTRLFWWYHSMA) threads the bilayer. Topologically, residues 296 to 365 (NEKNLKVSSQ…KIGEDNEKST (70 aa)) are cytoplasmic. S-palmitoyl cysteine attachment occurs at residues cysteine 331, cysteine 332, cysteine 343, and cysteine 348.

The protein belongs to the sphingomyelin synthase family. In terms of processing, palmitoylated on Cys-331, Cys-332, Cys-343 and Cys-348; which plays an important role in plasma membrane localization. In terms of tissue distribution, brain, heart, kidney, liver, muscle and stomach. Also expressed in a number of cell lines such as carcinoma HeLa cells, hepatoma Hep-G2 cells, and colon carcinoma Caco-2 cells.

It is found in the cell membrane. The protein localises to the golgi apparatus membrane. The enzyme catalyses an N-acylsphing-4-enine + a 1,2-diacyl-sn-glycero-3-phosphocholine = a sphingomyelin + a 1,2-diacyl-sn-glycerol. It catalyses the reaction an N-acylsphinganine + a 1,2-diacyl-sn-glycero-3-phosphocholine = an N-acylsphinganine-1-phosphocholine + a 1,2-diacyl-sn-glycerol. The catalysed reaction is an N-acyl-(4R)-4-hydroxysphinganine + a 1,2-diacyl-sn-glycero-3-phosphocholine = an N-acyl-(4R)-4-hydroxysphinganine-phosphocholine + a 1,2-diacyl-sn-glycerol. It carries out the reaction an N-acylsphinganine + a 1,2-diacyl-sn-glycero-3-phosphoethanolamine = an N-acylsphinganine-1-phosphoethanolamine + a 1,2-diacyl-sn-glycerol. The enzyme catalyses an N-acyl-(4R)-4-hydroxysphinganine + a 1,2-diacyl-sn-glycero-3-phosphoethanolamine = an N-acyl-(4R)-4-hydroxysphinganine-1-phosphoethanolamine + a 1,2-diacyl-sn-glycerol. It catalyses the reaction an N-acylsphing-4-enine + a 1,2-diacyl-sn-glycero-3-phosphoethanolamine = an N-acylsphing-4-enine 1-phosphoethanolamine + a 1,2-diacyl-sn-glycerol. The catalysed reaction is 1,2-dihexadecanoyl-sn-glycero-3-phosphocholine + an N-acylsphing-4-enine = 1,2-dihexadecanoyl-sn-glycerol + a sphingomyelin. It carries out the reaction 1-(9Z-octadecenoyl)-2-acyl-sn-3-glycerol + a sphingomyelin = a 1-(9Z-octadecenoyl)-2-acyl-sn-glycero-3-phosphocholine + an N-acylsphing-4-enine. The enzyme catalyses N-hexadecanoylsphinganine + a 1,2-diacyl-sn-glycero-3-phosphocholine = N-hexadecanoyl-sphinganine-1-phosphocholine + a 1,2-diacyl-sn-glycerol. It catalyses the reaction N-hexadecanoyl-(4R)-hydroxysphinganine + a 1,2-diacyl-sn-glycero-3-phosphocholine = N-hexadecanoyl-(4R)-hydroxysphinganine-phosphocholine + a 1,2-diacyl-sn-glycerol. The catalysed reaction is N-hexadecanoylsphinganine + a 1,2-diacyl-sn-glycero-3-phosphoethanolamine = N-hexadecanoyl-sphinganine-1-phosphoethanolamine + a 1,2-diacyl-sn-glycerol. It carries out the reaction N-hexadecanoyl-(4R)-hydroxysphinganine + a 1,2-diacyl-sn-glycero-3-phosphoethanolamine = N-hexadecanoyl-(4R)-hydroxysphinganine-1-phosphoethanolamine + a 1,2-diacyl-sn-glycerol. It participates in sphingolipid metabolism. Inhibited by bacterial PC-phospholipase C inhibitor D609. Sphingomyelin synthase that primarily contributes to sphingomyelin synthesis and homeostasis at the plasma membrane. Catalyzes the reversible transfer of phosphocholine moiety in sphingomyelin biosynthesis: in the forward reaction transfers phosphocholine head group of phosphatidylcholine (PC) on to ceramide (CER) to form ceramide phosphocholine (sphingomyelin, SM) and diacylglycerol (DAG) as by-product, and in the reverse reaction transfers phosphocholine from SM to DAG to form PC and CER. The direction of the reaction appears to depend on the levels of CER and DAG in the plasma membrane. Does not use free phosphorylcholine or CDP-choline as donors. Can also transfer phosphoethanolamine head group of phosphatidylethanolamine (PE) on to ceramide (CER) to form ceramide phosphoethanolamine (CPE). Regulates receptor-mediated signal transduction via mitogenic DAG and proapoptotic CER, as well as via SM, a structural component of membrane rafts that serve as platforms for signal transduction and protein sorting. To a lesser extent, plays a role in secretory transport via regulation of DAG pool at the Golgi apparatus and its downstream effects on PRKD1. Required for normal bone matrix mineralization. The chain is Phosphatidylcholine:ceramide cholinephosphotransferase 2 from Homo sapiens (Human).